The primary structure comprises 739 residues: Phosphoribosylformylglycinamidine synthase subunit PurL (739 aa).

His-52 is a catalytic residue. Residues Tyr-55 and Lys-94 each contribute to the ATP site. Glu-96 serves as a coordination point for Mg(2+). Residues 97-100 (SHNH) and Arg-119 each bind substrate. The active-site Proton acceptor is His-98. Residue Asp-120 participates in Mg(2+) binding. Gln-243 lines the substrate pocket. A Mg(2+)-binding site is contributed by Asp-271. 315–317 (ESQ) lines the substrate pocket. 2 residues coordinate ATP: Asp-498 and Gly-535. Mg(2+) is bound at residue Asn-536. A substrate-binding site is contributed by Ser-538.

Belongs to the FGAMS family. In terms of assembly, monomer. Part of the FGAM synthase complex composed of 1 PurL, 1 PurQ and 2 PurS subunits.

Its subcellular location is the cytoplasm. It catalyses the reaction N(2)-formyl-N(1)-(5-phospho-beta-D-ribosyl)glycinamide + L-glutamine + ATP + H2O = 2-formamido-N(1)-(5-O-phospho-beta-D-ribosyl)acetamidine + L-glutamate + ADP + phosphate + H(+). Its pathway is purine metabolism; IMP biosynthesis via de novo pathway; 5-amino-1-(5-phospho-D-ribosyl)imidazole from N(2)-formyl-N(1)-(5-phospho-D-ribosyl)glycinamide: step 1/2. In terms of biological role, part of the phosphoribosylformylglycinamidine synthase complex involved in the purines biosynthetic pathway. Catalyzes the ATP-dependent conversion of formylglycinamide ribonucleotide (FGAR) and glutamine to yield formylglycinamidine ribonucleotide (FGAM) and glutamate. The FGAM synthase complex is composed of three subunits. PurQ produces an ammonia molecule by converting glutamine to glutamate. PurL transfers the ammonia molecule to FGAR to form FGAM in an ATP-dependent manner. PurS interacts with PurQ and PurL and is thought to assist in the transfer of the ammonia molecule from PurQ to PurL. The protein is Phosphoribosylformylglycinamidine synthase subunit PurL of Caulobacter vibrioides (strain ATCC 19089 / CIP 103742 / CB 15) (Caulobacter crescentus).